Here is a 142-residue protein sequence, read N- to C-terminus: Histone H2B (142 aa).

The segment covering 1–10 (MPPKPAEKKP) has biased composition (basic and acidic residues). The tract at residues 1 to 50 (MPPKPAEKKPSSTAGKAPASSAGKAPAEAAKKTSKAPAKSGEKKKATKVR) is disordered. N6-acetyllysine; alternate is present on residues Lys-8 and Lys-9. Residues Lys-8 and Lys-9 each participate in a glycyl lysine isopeptide (Lys-Gly) (interchain with G-Cter in SUMO); alternate cross-link. The span at 11–28 (SSTAGKAPASSAGKAPAE) shows a compositional bias: low complexity. Lys-24 is subject to N6-acetyllysine. Over residues 40-50 (SGEKKKATKVR) the composition is skewed to basic and acidic residues. A Glycyl lysine isopeptide (Lys-Gly) (interchain with G-Cter in ubiquitin) cross-link involves residue Lys-137.

Belongs to the histone H2B family. In terms of assembly, the nucleosome is a histone octamer containing two molecules each of H2A, H2B, H3 and H4 assembled in one H3-H4 heterotetramer and two H2A-H2B heterodimers. The octamer wraps approximately 147 bp of DNA. Monoubiquitinated by the UBC2-BRE1 complex to form H2BK123ub1. H2BK123ub1 gives a specific tag for epigenetic transcriptional activation and is also prerequisite for H3K4me and H3K79me formation. H2BK123ub1 also modulates the formation of double-strand breaks during meiosis and is a prerequisite for DNA-damage checkpoint activation. In terms of processing, acetylation of N-terminal lysines and particularly formation of H2BK11ac has a positive effect on transcription. Post-translationally, sumoylation to form H2BK6su or H2BK7su occurs preferentially near the telomeres and represses gene transcription.

It is found in the nucleus. It localises to the chromosome. Its function is as follows. Core component of nucleosome. Nucleosomes wrap and compact DNA into chromatin, limiting DNA accessibility to the cellular machineries which require DNA as a template. Histones thereby play a central role in transcription regulation, DNA repair, DNA replication and chromosomal stability. DNA accessibility is regulated via a complex set of post-translational modifications of histones, also called histone code, and nucleosome remodeling. In Mycosarcoma maydis (Corn smut fungus), this protein is Histone H2B (HTB1).